Reading from the N-terminus, the 693-residue chain is Probable L-type lectin-domain containing receptor kinase VI.1 (693 aa).

Residues 1 to 22 form the signal peptide; the sequence is MGIARSINSFMFFFFLMILSNA. N-linked (GlcNAc...) asparagine glycans are attached at residues asparagine 21, asparagine 44, asparagine 71, asparagine 89, asparagine 141, asparagine 180, and asparagine 223. At 23–311 the chain is on the extracellular side; the sequence is SKSSVLAEAT…SNKKGYNSQV (289 aa). The segment at 33–279 is legume-lectin like; sequence TAKFTFIGFK…AHYVMGWSFS (247 aa). The chain crosses the membrane as a helical span at residues 312–332; the sequence is IVLIVALSIVTLVLLVLLFIF. Residues 333 to 693 lie on the Cytoplasmic side of the membrane; it reads VMYKRRIQEE…VSSSSIVSGR (361 aa). A Protein kinase domain is found at 368-642; sequence FKESEIIGTG…LRYLNGEENV (275 aa). Residues 374–382 and lysine 396 contribute to the ATP site; that span reads IGTGGFGIV. The Proton acceptor role is filled by aspartate 495. The interval 670–693 is disordered; the sequence is DRASSSNTFSSFSNVSSSSIVSGR.

It in the C-terminal section; belongs to the protein kinase superfamily. Ser/Thr protein kinase family. The protein in the N-terminal section; belongs to the leguminous lectin family.

The protein resides in the cell membrane. It carries out the reaction L-seryl-[protein] + ATP = O-phospho-L-seryl-[protein] + ADP + H(+). The catalysed reaction is L-threonyl-[protein] + ATP = O-phospho-L-threonyl-[protein] + ADP + H(+). The chain is Probable L-type lectin-domain containing receptor kinase VI.1 (LECRK61) from Arabidopsis thaliana (Mouse-ear cress).